Reading from the N-terminus, the 189-residue chain is Segregation and condensation protein B (189 aa).

It belongs to the ScpB family. As to quaternary structure, homodimer. Homodimerization may be required to stabilize the binding of ScpA to the Smc head domains. Component of a cohesin-like complex composed of ScpA, ScpB and the Smc homodimer, in which ScpA and ScpB bind to the head domain of Smc. The presence of the three proteins is required for the association of the complex with DNA.

The protein resides in the cytoplasm. In terms of biological role, participates in chromosomal partition during cell division. May act via the formation of a condensin-like complex containing Smc and ScpA that pull DNA away from mid-cell into both cell halves. The protein is Segregation and condensation protein B of Streptococcus mitis.